The sequence spans 351 residues: Rhodopsin (351 aa).

The Extracellular portion of the chain corresponds to 1–36 (MNGTEGQDFYVPMSNKTGVVRSPFEYPQYYLAEPWK). N-linked (GlcNAc...) asparagine glycans are attached at residues asparagine 2 and asparagine 15. The chain crosses the membrane as a helical span at residues 37–61 (FSALAAYMFMLILLGFPVNFLTLYV). Topologically, residues 62-73 (TIQHKKLRTPLN) are cytoplasmic. Residues 74–96 (YILLNLVVADLFMVFGGFTTTMY) traverse the membrane as a helical segment. Topologically, residues 97-110 (TSMNGYFVFGVTGC) are extracellular. Cysteine 110 and cysteine 187 form a disulfide bridge. Residues 111-133 (YIEGFFATLGGEIALWSLVVLAV) form a helical membrane-spanning segment. The short motif at 134-136 (ERY) is the 'Ionic lock' involved in activated form stabilization element. Residues 134–152 (ERYVVVCKPMSNFRFGENH) lie on the Cytoplasmic side of the membrane. Residues 153 to 173 (AIMGVAFSWIMAMACAAPPLF) traverse the membrane as a helical segment. The Extracellular segment spans residues 174 to 202 (GWSRYIPEGMQCSCGIDYYTLKPEINNES). The helical transmembrane segment at 203-224 (FVIYMFVVHFMIPLAVIFFCYG) threads the bilayer. Residues 225-252 (NLVCTVKEAAAQQQESATTQKAEKEVTR) lie on the Cytoplasmic side of the membrane. The helical transmembrane segment at 253 to 274 (MVIIMVIAFLICWVPYASVAFY) threads the bilayer. Residues 275 to 286 (IFTNQGSDFGPI) lie on the Extracellular side of the membrane. Residues 287-308 (FMTIPAFFAKSSAIYNPVIYIV) traverse the membrane as a helical segment. Lysine 296 carries the N6-(retinylidene)lysine modification. At 309-351 (MNKQFRNCMITTLCCGKNPLGDEDTSAGKTETSSVSTSQVSPA) the chain is on the cytoplasmic side. Residues cysteine 322 and cysteine 323 are each lipidated (S-palmitoyl cysteine). A disordered region spans residues 331–351 (EDTSAGKTETSSVSTSQVSPA). Residues 340–351 (TSSVSTSQVSPA) are compositionally biased toward low complexity. Serine 341 carries the post-translational modification Phosphoserine; by RK and GRK7.

The protein belongs to the G-protein coupled receptor 1 family. Opsin subfamily. Contains one covalently linked retinal chromophore. Upon light absorption, the covalently bound 11-cis-retinal is converted to all-trans-retinal. After hydrolysis of the Schiff base and release of the covalently bound all-trans-retinal, active rhodopsin is regenerated by binding of a fresh molecule of 11-cis-retinal.

The protein resides in the membrane. The protein localises to the cell projection. Its subcellular location is the cilium. It localises to the photoreceptor outer segment. Photoreceptor required for image-forming vision at low light intensity. Required for photoreceptor cell viability after birth. Light-induced isomerization of 11-cis to all-trans retinal triggers a conformational change that activates signaling via G-proteins. Subsequent receptor phosphorylation mediates displacement of the bound G-protein alpha subunit by arrestin and terminates signaling. This is Rhodopsin (RHO) from Gallus gallus (Chicken).